Here is a 213-residue protein sequence, read N- to C-terminus: Large ribosomal subunit protein uL3 (213 aa).

It belongs to the universal ribosomal protein uL3 family. As to quaternary structure, part of the 50S ribosomal subunit. Forms a cluster with proteins L14 and L19.

Its function is as follows. One of the primary rRNA binding proteins, it binds directly near the 3'-end of the 23S rRNA, where it nucleates assembly of the 50S subunit. The chain is Large ribosomal subunit protein uL3 from Bifidobacterium longum (strain DJO10A).